A 245-amino-acid polypeptide reads, in one-letter code: MLIIPAIDLKDGKCVRLRQGRMEDSTVFGDDPVDMATKWVDAGARRLHLVDLNGAFAGEPVNGEIVKAIAVKYPNLPIQIGGGIRSAETIEAYLKAGVQWVIIGTKAVKEPEFVTEMCKEFPGHIIVGLDAKDGRVATDGWAEVSEVMAVDLAKRFANDGVSSIVYTDIARDGMMQGVNVEATAKLAEEGGIPVIASGGVTNMDDLKRLATVADTGVIGAITGRAIYEGTLDVAEAQAYCDSLKN.

Asp-8 serves as the catalytic Proton acceptor. Catalysis depends on Asp-130, which acts as the Proton donor.

Belongs to the HisA/HisF family.

The protein localises to the cytoplasm. The catalysed reaction is 1-(5-phospho-beta-D-ribosyl)-5-[(5-phospho-beta-D-ribosylamino)methylideneamino]imidazole-4-carboxamide = 5-[(5-phospho-1-deoxy-D-ribulos-1-ylimino)methylamino]-1-(5-phospho-beta-D-ribosyl)imidazole-4-carboxamide. It participates in amino-acid biosynthesis; L-histidine biosynthesis; L-histidine from 5-phospho-alpha-D-ribose 1-diphosphate: step 4/9. This is 1-(5-phosphoribosyl)-5-[(5-phosphoribosylamino)methylideneamino] imidazole-4-carboxamide isomerase from Marinobacter nauticus (strain ATCC 700491 / DSM 11845 / VT8) (Marinobacter aquaeolei).